Reading from the N-terminus, the 357-residue chain is Dihydroorotate dehydrogenase (quinone) (357 aa).

Residues alanine 65–lysine 69 and threonine 89 contribute to the FMN site. Residue lysine 69 participates in substrate binding. Asparagine 114–phenylalanine 118 provides a ligand contact to substrate. Asparagine 156 and asparagine 189 together coordinate FMN. Asparagine 189 provides a ligand contact to substrate. Catalysis depends on serine 192, which acts as the Nucleophile. Residue asparagine 194 participates in substrate binding. Positions 234 and 262 each coordinate FMN. Asparagine 263–threonine 264 is a binding site for substrate. FMN-binding positions include glycine 285, glycine 314, and tyrosine 335 to threonine 336.

Belongs to the dihydroorotate dehydrogenase family. Type 2 subfamily. As to quaternary structure, monomer. FMN serves as cofactor.

Its subcellular location is the cell membrane. It carries out the reaction (S)-dihydroorotate + a quinone = orotate + a quinol. Its pathway is pyrimidine metabolism; UMP biosynthesis via de novo pathway; orotate from (S)-dihydroorotate (quinone route): step 1/1. In terms of biological role, catalyzes the conversion of dihydroorotate to orotate with quinone as electron acceptor. In Albidiferax ferrireducens (strain ATCC BAA-621 / DSM 15236 / T118) (Rhodoferax ferrireducens), this protein is Dihydroorotate dehydrogenase (quinone).